The primary structure comprises 498 residues: MVAEVSPKLAASPMKKPFGFRGKMGKWCCCCFPCCRGSGKNNMGAWRDHDDSAFTEPRYHVRREDLGKLHRAAWWGEVPRADLIVMLRGPGINKRDKKKRTALHLACANGNSEVVSLLLDRQCQLHVFDSKKRTALIKAVQCQEDECALMLLQHGTDPNLPDMYGNTALHYAVYNEDKLMAKTLLLYGADIESKNKGGLTPLLLAVHGQKQRMVKFLIKKKANLNALDRFGRTALILAVRCGSASIVSLLLQQNIDVFSQDVFGQTAEDYAVSSHHSIICQLLSDYKENQMPNNSSGNSNPEQDLKLTSEEEPQRLKGSENSQHEKVTQEPDINKDCDREVEEEMQKHGSNNVGLSENLTDGAAAGNGDGGLVPQRKSRKHENQQFPNTEIEEYHRPEKKSNEKNKVKSQIHSVDNLDDITWPSEIASEDYDLLFSNYETFTLLIEQLKMDFNDSASLSKIQDAVISEEHLLELKNSHYEQLTVEVEQMENMVHVLQK.

5 ANK repeats span residues 98–127 (KKRT…QLHV), 131–160 (KKRT…DPNL), 164–193 (YGNT…DIES), 197–226 (GGLT…NLNA), and 230–259 (FGRT…DVFS). The tract at residues 289–410 (NQMPNNSSGN…SNEKNKVKSQ (122 aa)) is disordered. Residues 290–302 (QMPNNSSGNSNPE) are compositionally biased toward polar residues. The segment covering 303 to 338 (QDLKLTSEEEPQRLKGSENSQHEKVTQEPDINKDCD) has biased composition (basic and acidic residues). The span at 348-359 (HGSNNVGLSENL) shows a compositional bias: polar residues. Residues 392–406 (EEYHRPEKKSNEKNK) are compositionally biased toward basic and acidic residues. Residues 469–497 (EHLLELKNSHYEQLTVEVEQMENMVHVLQ) are a coiled coil.

The protein belongs to the POTE family.

This chain is POTE ankyrin domain family member A (POTEA), found in Homo sapiens (Human).